Here is a 263-residue protein sequence, read N- to C-terminus: MKPTTIALLQKCKQEKKRFATITAYDHSFAKLFADEGINVLLVGDSLGMTVQGHDSTLPVTVEDIAYHTRAVRRGAPNSLLLADLPFMAYATPEQTFANAAIVMRAGANMVKLEGGAWLADTVRMLAERAVPVCGHLGLTPQSVNVFGGYKVQGRGDAAQTLFEDALALEAAGAQLLVLECVPVELAKRITDALTIPVIGIGAGNVTDGQILVMHDAFGITGGHIPKFAKNFLAEAGDIRAAVRQYIAEVESGVYPGEEHSFH.

Positions 45 and 84 each coordinate Mg(2+). 3-methyl-2-oxobutanoate contacts are provided by residues 45–46 (DS), aspartate 84, and lysine 112. Residue glutamate 114 participates in Mg(2+) binding. Glutamate 180 acts as the Proton acceptor in catalysis.

It belongs to the PanB family. In terms of assembly, homodecamer; pentamer of dimers. The cofactor is Mg(2+).

Its subcellular location is the cytoplasm. It carries out the reaction 3-methyl-2-oxobutanoate + (6R)-5,10-methylene-5,6,7,8-tetrahydrofolate + H2O = 2-dehydropantoate + (6S)-5,6,7,8-tetrahydrofolate. It participates in cofactor biosynthesis; (R)-pantothenate biosynthesis; (R)-pantoate from 3-methyl-2-oxobutanoate: step 1/2. Functionally, catalyzes the reversible reaction in which hydroxymethyl group from 5,10-methylenetetrahydrofolate is transferred onto alpha-ketoisovalerate to form ketopantoate. This is 3-methyl-2-oxobutanoate hydroxymethyltransferase from Klebsiella pneumoniae subsp. pneumoniae (strain ATCC 700721 / MGH 78578).